We begin with the raw amino-acid sequence, 1279 residues long: Amylopullulanase (1279 aa).

An N-terminal signal peptide occupies residues 1 to 35 (MYKKLFTKKFISFVMSLLLVLTAAFSSMPFHNVYA). The Ca(2+) site is built by Asp-248, Asn-250, Asp-288, Asp-343, Asn-401, Asp-403, Asn-406, Asp-407, Gly-452, and Asp-454. Positions 527 and 627 each coordinate substrate. Catalysis depends on Asp-629, which acts as the Nucleophile. The active-site Proton donor is the Glu-658. Residues 734 to 735 (HD), Asp-794, and Arg-798 contribute to the substrate site. 2 Fibronectin type-III domains span residues 930 to 1022 (APQV…AYPI) and 1158 to 1252 (KPTA…VVPI).

The protein belongs to the glycosyl hydrolase 13 family. It depends on Ca(2+) as a cofactor.

It carries out the reaction Endohydrolysis of (1-&gt;4)-alpha-D-glucosidic linkages in polysaccharides containing three or more (1-&gt;4)-alpha-linked D-glucose units.. The enzyme catalyses Hydrolysis of (1-&gt;6)-alpha-D-glucosidic linkages in pullulan, amylopectin and glycogen, and in the alpha- and beta-limit dextrins of amylopectin and glycogen.. The sequence is that of Amylopullulanase (apu) from Thermoanaerobacterium saccharolyticum.